The following is an 833-amino-acid chain: Leucine--tRNA ligase (833 aa).

A 'HIGH' region motif is present at residues 41-52 (PYPSGAGLHVGH). The 'KMSKS' region signature appears at 610-614 (KMSKS). Residue K613 participates in ATP binding.

This sequence belongs to the class-I aminoacyl-tRNA synthetase family.

The protein localises to the cytoplasm. It carries out the reaction tRNA(Leu) + L-leucine + ATP = L-leucyl-tRNA(Leu) + AMP + diphosphate. This is Leucine--tRNA ligase from Streptococcus pyogenes serotype M3 (strain ATCC BAA-595 / MGAS315).